The primary structure comprises 505 residues: Glutamyl-tRNA(Gln) amidotransferase subunit B, mitochondrial (505 aa).

This sequence belongs to the GatB/GatE family. GatB subfamily. In terms of assembly, subunit of the heterotrimeric GatCAB amidotransferase (AdT) complex, composed of A, B and C subunits.

Its subcellular location is the mitochondrion. The enzyme catalyses L-glutamyl-tRNA(Gln) + L-glutamine + ATP + H2O = L-glutaminyl-tRNA(Gln) + L-glutamate + ADP + phosphate + H(+). Its function is as follows. Allows the formation of correctly charged Gln-tRNA(Gln) through the transamidation of misacylated Glu-tRNA(Gln) in the mitochondria. The reaction takes place in the presence of glutamine and ATP through an activated gamma-phospho-Glu-tRNA(Gln). This is Glutamyl-tRNA(Gln) amidotransferase subunit B, mitochondrial from Schizosaccharomyces japonicus (strain yFS275 / FY16936) (Fission yeast).